The primary structure comprises 101 residues: MAGQKIRIRLKAYDHEAIDASARKIVETVVRTGANVVGPVPLPTEKNVYCVIRSPHKYKDSREHFEMRTHKRLIDILDPTPKTVDALMRIDLPASVDVNIQ.

The protein belongs to the universal ribosomal protein uS10 family. Part of the 30S ribosomal subunit.

Its function is as follows. Involved in the binding of tRNA to the ribosomes. The protein is Small ribosomal subunit protein uS10 of Mycobacterium leprae (strain Br4923).